The chain runs to 325 residues: Ferrochelatase (325 aa).

The Fe cation site is built by His172 and Glu267.

Belongs to the ferrochelatase family.

It is found in the cytoplasm. It carries out the reaction heme b + 2 H(+) = protoporphyrin IX + Fe(2+). It functions in the pathway porphyrin-containing compound metabolism; protoheme biosynthesis; protoheme from protoporphyrin-IX: step 1/1. Catalyzes the ferrous insertion into protoporphyrin IX. This Acidobacterium capsulatum (strain ATCC 51196 / DSM 11244 / BCRC 80197 / JCM 7670 / NBRC 15755 / NCIMB 13165 / 161) protein is Ferrochelatase.